The chain runs to 881 residues: Valine--tRNA ligase (881 aa).

Positions 49 to 59 (PNVTGKLHLGH) match the 'HIGH' region motif. A 'KMSKS' region motif is present at residues 526–530 (KMSKS). Position 529 (Lys529) interacts with ATP. Residues 810–881 (LADLINLDEE…VRQRLADLEK (72 aa)) are a coiled coil.

It belongs to the class-I aminoacyl-tRNA synthetase family. ValS type 1 subfamily. In terms of assembly, monomer.

The protein resides in the cytoplasm. The catalysed reaction is tRNA(Val) + L-valine + ATP = L-valyl-tRNA(Val) + AMP + diphosphate. In terms of biological role, catalyzes the attachment of valine to tRNA(Val). As ValRS can inadvertently accommodate and process structurally similar amino acids such as threonine, to avoid such errors, it has a 'posttransfer' editing activity that hydrolyzes mischarged Thr-tRNA(Val) in a tRNA-dependent manner. The protein is Valine--tRNA ligase of Bacillus thuringiensis subsp. konkukian (strain 97-27).